Reading from the N-terminus, the 396-residue chain is DNA polymerase IV (396 aa).

In terms of domain architecture, UmuC spans 5–192; that stretch reads IFHVDVNSAF…LPVGELFMVG (188 aa). Mg(2+)-binding residues include D9 and D111. The active site involves E112.

It belongs to the DNA polymerase type-Y family. As to quaternary structure, monomer. It depends on Mg(2+) as a cofactor.

The protein localises to the cytoplasm. It catalyses the reaction DNA(n) + a 2'-deoxyribonucleoside 5'-triphosphate = DNA(n+1) + diphosphate. Its function is as follows. Poorly processive, error-prone DNA polymerase involved in untargeted mutagenesis. Copies undamaged DNA at stalled replication forks, which arise in vivo from mismatched or misaligned primer ends. These misaligned primers can be extended by PolIV. Exhibits no 3'-5' exonuclease (proofreading) activity. May be involved in translesional synthesis, in conjunction with the beta clamp from PolIII. This Clostridium acetobutylicum (strain ATCC 824 / DSM 792 / JCM 1419 / IAM 19013 / LMG 5710 / NBRC 13948 / NRRL B-527 / VKM B-1787 / 2291 / W) protein is DNA polymerase IV.